Consider the following 186-residue polypeptide: CASP-like protein 4C2 (186 aa).

Residues 1–31 are Cytoplasmic-facing; the sequence is MRSPQPHRSGGDTQQHFQSTVSVQKLKRFNS. The helical transmembrane segment at 32-52 threads the bilayer; the sequence is LILVFRFAAFCFSLASAVFML. Residues 53–71 lie on the Extracellular side of the membrane; sequence TNSRGSDSLHWYNFDAFRY. Residues 72-92 traverse the membrane as a helical segment; sequence VFAANAIVAIYSLFEMAASVW. The Cytoplasmic segment spans residues 93-103; sequence EISRNATLFPE. Residues 104-124 form a helical membrane-spanning segment; that stretch reads ICQVWFDFGHDQVFAYLLLSA. The Extracellular segment spans residues 125–150; the sequence is NTAGTELARTLKDTCTDNKAFCVQSD. Residues 151 to 171 form a helical membrane-spanning segment; the sequence is IAIVLGFAGFLFLGISSLFSG. The Cytoplasmic segment spans residues 172 to 186; sequence FRVVCFIINGSRFYV.

It belongs to the Casparian strip membrane proteins (CASP) family. As to quaternary structure, homodimer and heterodimers.

It localises to the cell membrane. The sequence is that of CASP-like protein 4C2 from Populus trichocarpa (Western balsam poplar).